The sequence spans 47 residues: Large ribosomal subunit protein bL27c (47 aa).

The disordered stretch occupies residues 1 to 21 (STKNGRDSNAQRLGVKKYGGE).

Belongs to the bacterial ribosomal protein bL27 family.

Its subcellular location is the plastid. It is found in the chloroplast. This chain is Large ribosomal subunit protein bL27c (rpl27), found in Porphyridium purpureum (Red alga).